The primary structure comprises 48 residues: Large ribosomal subunit protein uL14 (48 aa).

The protein belongs to the universal ribosomal protein uL14 family.

The protein is Large ribosomal subunit protein uL14 (RPL23) of Onchocerca volvulus.